The sequence spans 627 residues: RNA interference defective protein 10 (627 aa).

Disordered stretches follow at residues 1-31 (MSNH…VRQN), 467-487 (QRDT…HDQY), and 523-589 (SSVR…SEDY). Basic and acidic residues-rich tracts occupy residues 7–16 (NFRDYQREGI), 467–478 (QRDTDEQYDVHQ), and 526–537 (REPEHPSARSRD).

The protein belongs to the maelstrom family. In terms of assembly, interacts with rde-11 (via RING-type zinc finger domain). Interacts with ergo-1.

Functionally, in complex with rde-11, required in the endogenous and exogenous siRNA pathway for biogenesis and accumulation of secondary small interfering RNA (siRNA) intermediates, such as 22G-siRNAs derived from ergo-1 targets. The protein is RNA interference defective protein 10 of Caenorhabditis elegans.